A 601-amino-acid polypeptide reads, in one-letter code: Elongation factor 4 (601 aa).

The 183-residue stretch at 2 to 184 (DLIRNFSIIA…EMIARVPPPT (183 aa)) folds into the tr-type G domain. Residues 14–19 (DHGKST) and 131–134 (NKID) each bind GTP.

The protein belongs to the TRAFAC class translation factor GTPase superfamily. Classic translation factor GTPase family. LepA subfamily.

The protein localises to the cell inner membrane. The catalysed reaction is GTP + H2O = GDP + phosphate + H(+). Its function is as follows. Required for accurate and efficient protein synthesis under certain stress conditions. May act as a fidelity factor of the translation reaction, by catalyzing a one-codon backward translocation of tRNAs on improperly translocated ribosomes. Back-translocation proceeds from a post-translocation (POST) complex to a pre-translocation (PRE) complex, thus giving elongation factor G a second chance to translocate the tRNAs correctly. Binds to ribosomes in a GTP-dependent manner. The protein is Elongation factor 4 of Polynucleobacter necessarius subsp. necessarius (strain STIR1).